Consider the following 382-residue polypeptide: MSDMIRDFFKMESAGGILLVIAAAIAMVIANSAMGEGYQAFLHTYVFGMSVSHWINDGLMAVFFLLIGLEVKRELLEGALKSRETAIFPAIAAVGGMLAPALIYVAFNFNDPAAIQGWAIPAATDIAFALGIMALLGKRVPVSLKVFLLALAIIDDLGVVVIIALFYSSDLSTIALTIGFIMTGVLFMLNAKHVTKLSIYLVAGLILWIAVLKSGVHATLAGVVIGFAIPLKGNKGEHSPLKHLEHALHPYVAFAILPVFAFANAGISLQGVSLAGLTSMLPLGVALGLFLGKPLGIFSFSWAAVKLGVAKLPEGINFKHIFAVSVLCGIGFTMSIFISSLAFGQANEAYDTYARLGILMGSTTAALLGYSLLRLSLPLKKA.

A run of 11 helical transmembrane segments spans residues 14–34 (AGGI…NSAM), 47–67 (FGMS…FLLI), 87–107 (IFPA…YVAF), 117–137 (GWAI…ALLG), 146–166 (VFLL…IALF), 171–191 (LSTI…MLNA), 205–225 (LILW…GVVI), 247–267 (ALHP…NAGI), 271–291 (GVSL…GLFL), 321–341 (IFAV…ISSL), and 353–373 (YARL…YSLL).

The protein belongs to the NhaA Na(+)/H(+) (TC 2.A.33) antiporter family.

The protein resides in the cell inner membrane. It catalyses the reaction Na(+)(in) + 2 H(+)(out) = Na(+)(out) + 2 H(+)(in). Its function is as follows. Na(+)/H(+) antiporter that extrudes sodium in exchange for external protons. The sequence is that of Na(+)/H(+) antiporter NhaA from Vibrio cholerae serotype O1 (strain ATCC 39541 / Classical Ogawa 395 / O395).